The primary structure comprises 88 residues: Small ribosomal subunit protein uS15 (88 aa).

This sequence belongs to the universal ribosomal protein uS15 family. As to quaternary structure, part of the 30S ribosomal subunit. Forms a bridge to the 50S subunit in the 70S ribosome, contacting the 23S rRNA.

Its function is as follows. One of the primary rRNA binding proteins, it binds directly to 16S rRNA where it helps nucleate assembly of the platform of the 30S subunit by binding and bridging several RNA helices of the 16S rRNA. In terms of biological role, forms an intersubunit bridge (bridge B4) with the 23S rRNA of the 50S subunit in the ribosome. This chain is Small ribosomal subunit protein uS15, found in Borreliella burgdorferi (strain ATCC 35210 / DSM 4680 / CIP 102532 / B31) (Borrelia burgdorferi).